A 449-amino-acid polypeptide reads, in one-letter code: MREILSIHIGQAGAQVGNACWELYCLEHGIKPDGQMPSDKSVGGGDDAFNTFFSETSSGKHVPRAIFLDLEPTVIDEIRTGTYRQLFHPEQLITGKEDAANNYARGHYTVGKELVDLCLDRVRKLADQCSGLQGFLVFHSVGGGTGSGFGSLLLERLSVDYGKKSKLDFCVYPSPQVSTAVVEPYNSVLSTHGLLEHTDVAFMLDNEAIYDLCKRSLDIERPSYANLNRLVAQVISSLTTSLRFDGALNVDITEFQTNLVPYPRIHFMLASYAPVISAEKAFHEQLSVAELTNTVFDPSSMMAKCDPRHGKYMACCLMYRGDVVPKDVNAAVAVIKTKRTIQFVDWCPTGFKCGINYQPPSVVPGGDLAKVQRALCMISNTTAIAEVFSRIDHKFDLMYAKRAFVHWYVGEGMEEVEFSEAREDLAALEKDYEEVGAETAEDDGADEEM.

A GTP-binding site is contributed by Gln-11. Lys-40 bears the N6-acetyllysine mark. Residues Glu-71, Ser-140, Gly-144, Thr-145, Thr-179, Asn-206, and Asn-228 each coordinate GTP. Residue Glu-71 coordinates Mg(2+). Glu-254 is an active-site residue.

It belongs to the tubulin family. In terms of assembly, dimer of alpha and beta chains. A typical microtubule is a hollow water-filled tube with an outer diameter of 25 nm and an inner diameter of 15 nM. Alpha-beta heterodimers associate head-to-tail to form protofilaments running lengthwise along the microtubule wall with the beta-tubulin subunit facing the microtubule plus end conferring a structural polarity. Microtubules usually have 13 protofilaments but different protofilament numbers can be found in some organisms and specialized cells. Requires Mg(2+) as cofactor. In terms of processing, acetylation of alpha chains at Lys-40 stabilizes microtubules and affects affinity and processivity of microtubule motors. This modification has a role in multiple cellular functions, ranging from cell motility, cell cycle progression or cell differentiation to intracellular trafficking and signaling.

The protein localises to the cytoplasm. It localises to the cytoskeleton. It is found in the spindle. The protein resides in the nucleus. It carries out the reaction GTP + H2O = GDP + phosphate + H(+). In terms of biological role, tubulin is the major constituent of microtubules, a cylinder consisting of laterally associated linear protofilaments composed of alpha- and beta-tubulin heterodimers. Microtubules grow by the addition of GTP-tubulin dimers to the microtubule end, where a stabilizing cap forms. Below the cap, tubulin dimers are in GDP-bound state, owing to GTPase activity of alpha-tubulin. The polypeptide is Tubulin alpha-2B chain (ALTBE) (Physarum polycephalum (Slime mold)).